Here is a 99-residue protein sequence, read N- to C-terminus: UPF0122 protein UUR10_0158 (99 aa).

Belongs to the UPF0122 family.

Might take part in the signal recognition particle (SRP) pathway. This is inferred from the conservation of its genetic proximity to ftsY/ffh. May be a regulatory protein. The polypeptide is UPF0122 protein UUR10_0158 (Ureaplasma urealyticum serovar 10 (strain ATCC 33699 / Western)).